An 85-amino-acid chain; its full sequence is Cell division topological specificity factor (85 aa).

This sequence belongs to the MinE family.

Prevents the cell division inhibition by proteins MinC and MinD at internal division sites while permitting inhibition at polar sites. This ensures cell division at the proper site by restricting the formation of a division septum at the midpoint of the long axis of the cell. In Cellvibrio japonicus (strain Ueda107) (Pseudomonas fluorescens subsp. cellulosa), this protein is Cell division topological specificity factor.